The sequence spans 249 residues: MNVLIHGFGAMGRIVEEVAHAQGVNVTAIVSPGSDEHTATLNEVDVPVDVVIDFSNPALLPDLLAFGRERNIPLVIATTGFTPEELAEIETASQEIPIFQSYNTSYGIALLKQLLDQLVPLTLGYDIEVIEAHHRKKVDAPSGTAELLARAIEAKRDVTPIYERTSRREARGAEELGMHSIRGGTIFGEHTVLFAGDDEMIELKHTALSKRVFANGALAAAATIIDRPAGLYNLSNLYEEATHVTHKRL.

NAD(+)-binding positions include 77–79 (ATT) and 101–104 (SYNT). His-133 acts as the Proton donor/acceptor in catalysis. (S)-2,3,4,5-tetrahydrodipicolinate is bound at residue His-134. The Proton donor role is filled by Lys-137. A (S)-2,3,4,5-tetrahydrodipicolinate-binding site is contributed by 143–144 (GT).

It belongs to the DapB family.

It is found in the cytoplasm. The enzyme catalyses (S)-2,3,4,5-tetrahydrodipicolinate + NAD(+) + H2O = (2S,4S)-4-hydroxy-2,3,4,5-tetrahydrodipicolinate + NADH + H(+). It catalyses the reaction (S)-2,3,4,5-tetrahydrodipicolinate + NADP(+) + H2O = (2S,4S)-4-hydroxy-2,3,4,5-tetrahydrodipicolinate + NADPH + H(+). Its pathway is amino-acid biosynthesis; L-lysine biosynthesis via DAP pathway; (S)-tetrahydrodipicolinate from L-aspartate: step 4/4. Functionally, catalyzes the conversion of 4-hydroxy-tetrahydrodipicolinate (HTPA) to tetrahydrodipicolinate. This is 4-hydroxy-tetrahydrodipicolinate reductase from Exiguobacterium sp. (strain ATCC BAA-1283 / AT1b).